We begin with the raw amino-acid sequence, 151 residues long: Large ribosomal subunit protein bL9 (151 aa).

It belongs to the bacterial ribosomal protein bL9 family.

Its function is as follows. Binds to the 23S rRNA. The chain is Large ribosomal subunit protein bL9 from Prochlorococcus marinus (strain MIT 9312).